Reading from the N-terminus, the 52-residue chain is ATP synthase protein 8 (52 aa).

A helical transmembrane segment spans residues 7–23; sequence MMWFSLFIMFSMTMMLF.

The protein belongs to the ATPase protein 8 family. As to quaternary structure, F-type ATPases have 2 components, CF(1) - the catalytic core - and CF(0) - the membrane proton channel.

The protein localises to the mitochondrion membrane. Its function is as follows. Mitochondrial membrane ATP synthase (F(1)F(0) ATP synthase or Complex V) produces ATP from ADP in the presence of a proton gradient across the membrane which is generated by electron transport complexes of the respiratory chain. F-type ATPases consist of two structural domains, F(1) - containing the extramembraneous catalytic core and F(0) - containing the membrane proton channel, linked together by a central stalk and a peripheral stalk. During catalysis, ATP synthesis in the catalytic domain of F(1) is coupled via a rotary mechanism of the central stalk subunits to proton translocation. Part of the complex F(0) domain. Minor subunit located with subunit a in the membrane. The polypeptide is ATP synthase protein 8 (MT-ATP8) (Locusta migratoria (Migratory locust)).